A 235-amino-acid chain; its full sequence is Phosphoribosylformylglycinamidine synthase subunit PurQ (235 aa).

Residues Gly-4–Arg-234 form the Glutamine amidotransferase type-1 domain. Cys-86 acts as the Nucleophile in catalysis. Catalysis depends on residues His-203 and Glu-205.

As to quaternary structure, part of the FGAM synthase complex composed of 1 PurL, 1 PurQ and 2 PurS subunits.

It is found in the cytoplasm. The enzyme catalyses N(2)-formyl-N(1)-(5-phospho-beta-D-ribosyl)glycinamide + L-glutamine + ATP + H2O = 2-formamido-N(1)-(5-O-phospho-beta-D-ribosyl)acetamidine + L-glutamate + ADP + phosphate + H(+). It catalyses the reaction L-glutamine + H2O = L-glutamate + NH4(+). It participates in purine metabolism; IMP biosynthesis via de novo pathway; 5-amino-1-(5-phospho-D-ribosyl)imidazole from N(2)-formyl-N(1)-(5-phospho-D-ribosyl)glycinamide: step 1/2. Functionally, part of the phosphoribosylformylglycinamidine synthase complex involved in the purines biosynthetic pathway. Catalyzes the ATP-dependent conversion of formylglycinamide ribonucleotide (FGAR) and glutamine to yield formylglycinamidine ribonucleotide (FGAM) and glutamate. The FGAM synthase complex is composed of three subunits. PurQ produces an ammonia molecule by converting glutamine to glutamate. PurL transfers the ammonia molecule to FGAR to form FGAM in an ATP-dependent manner. PurS interacts with PurQ and PurL and is thought to assist in the transfer of the ammonia molecule from PurQ to PurL. The sequence is that of Phosphoribosylformylglycinamidine synthase subunit PurQ from Symbiobacterium thermophilum (strain DSM 24528 / JCM 14929 / IAM 14863 / T).